The primary structure comprises 103 residues: Small ribosomal subunit protein bS6c (103 aa).

Belongs to the bacterial ribosomal protein bS6 family.

The protein localises to the plastid. It localises to the chloroplast. Binds together with bS18 to 16S ribosomal RNA. This chain is Small ribosomal subunit protein bS6c, found in Gracilaria tenuistipitata var. liui (Red alga).